The primary structure comprises 271 residues: Isoprenyl transferase (271 aa).

Residue aspartate 35 is part of the active site. Aspartate 35 serves as a coordination point for Mg(2+). Substrate is bound by residues 36 to 39 (GNGR), tryptophan 40, arginine 48, histidine 52, and 80 to 82 (STE). Catalysis depends on asparagine 83, which acts as the Proton acceptor. Residues tryptophan 84, arginine 86, arginine 207, and 213 to 215 (RIS) each bind substrate. Glutamate 226 is a Mg(2+) binding site.

It belongs to the UPP synthase family. In terms of assembly, homodimer. Mg(2+) serves as cofactor.

Its function is as follows. Catalyzes the condensation of isopentenyl diphosphate (IPP) with allylic pyrophosphates generating different type of terpenoids. The polypeptide is Isoprenyl transferase (Enterococcus faecalis (strain ATCC 700802 / V583)).